The primary structure comprises 120 residues: MFVLSGYEYLLGFLIICSLVPALALSASKLLRPTGNSLERRTTYESGMEPIGGAWIQFNIRYYMFALVFVVFDVETVFLYPWAVAFHRLGLLAFIEALIFIAILVVALVYAWRKGALEWS.

The next 3 membrane-spanning stretches (helical) occupy residues 1–21 (MFVL…SLVP), 64–84 (MFAL…PWAV), and 89–109 (LGLL…VALV).

The protein belongs to the complex I subunit 3 family. In terms of assembly, NDH-1 can be composed of about 15 different subunits; different subcomplexes with different compositions have been identified which probably have different functions.

It localises to the cellular thylakoid membrane. The enzyme catalyses a plastoquinone + NADH + (n+1) H(+)(in) = a plastoquinol + NAD(+) + n H(+)(out). It catalyses the reaction a plastoquinone + NADPH + (n+1) H(+)(in) = a plastoquinol + NADP(+) + n H(+)(out). NDH-1 shuttles electrons from an unknown electron donor, via FMN and iron-sulfur (Fe-S) centers, to quinones in the respiratory and/or the photosynthetic chain. The immediate electron acceptor for the enzyme in this species is believed to be plastoquinone. Couples the redox reaction to proton translocation, and thus conserves the redox energy in a proton gradient. Cyanobacterial NDH-1 also plays a role in inorganic carbon-concentration. This Trichormus variabilis (strain ATCC 29413 / PCC 7937) (Anabaena variabilis) protein is NAD(P)H-quinone oxidoreductase subunit 3.